Reading from the N-terminus, the 361-residue chain is Cobalt-precorrin-5B C(1)-methyltransferase (361 aa).

The protein belongs to the CbiD family.

It catalyses the reaction Co-precorrin-5B + S-adenosyl-L-methionine = Co-precorrin-6A + S-adenosyl-L-homocysteine. Its pathway is cofactor biosynthesis; adenosylcobalamin biosynthesis; cob(II)yrinate a,c-diamide from sirohydrochlorin (anaerobic route): step 6/10. Functionally, catalyzes the methylation of C-1 in cobalt-precorrin-5B to form cobalt-precorrin-6A. The polypeptide is Cobalt-precorrin-5B C(1)-methyltransferase (Methanobrevibacter smithii (strain ATCC 35061 / DSM 861 / OCM 144 / PS)).